Here is an 86-residue protein sequence, read N- to C-terminus: U1-theraphotoxin-Pc1a (86 aa).

The N-terminal stretch at 1–21 (MMRVLIVTAVFTFFLVLTSSG) is a signal peptide. Positions 22–49 (HDEDNEQRNILEGMFLDRAIETPKGLEE) are excised as a propeptide. Disulfide bonds link Cys-53–Cys-70, Cys-60–Cys-75, and Cys-69–Cys-80. The residue at position 84 (Val-84) is a Valine amide.

In terms of tissue distribution, expressed by the venom gland.

The protein localises to the secreted. Possesses strong antiplasmodial activity against the intra-erythrocyte stage of P.falciparum in vitro. IC(50) for inhibiting P.falciparum growth is 1.59 uM. Interacts with infected and healthy erythrocytes. Does not lyse erythrocytes, is not cytotoxic to nucleated mammalian cells, and does not inhibit neuromuscular function. Has neither antibacterial nor antifungal activity. In Psalmopoeus cambridgei (Trinidad chevron tarantula), this protein is U1-theraphotoxin-Pc1a.